A 124-amino-acid polypeptide reads, in one-letter code: uncharacterized protein (124 aa).

Its function is as follows. This protein may be involved in virus assembly. This is an uncharacterized protein from Sulfolobus spindle-shape virus 1 (SSV1).